Here is a 145-residue protein sequence, read N- to C-terminus: Deoxyuridine 5'-triphosphate nucleotidohydrolase (145 aa).

Substrate is bound by residues 64–66 (RSG), asparagine 77, 81–83 (TID), and methionine 91.

This sequence belongs to the dUTPase family. Mg(2+) is required as a cofactor.

The enzyme catalyses dUTP + H2O = dUMP + diphosphate + H(+). It participates in pyrimidine metabolism; dUMP biosynthesis; dUMP from dCTP (dUTP route): step 2/2. Functionally, this enzyme is involved in nucleotide metabolism: it produces dUMP, the immediate precursor of thymidine nucleotides and it decreases the intracellular concentration of dUTP so that uracil cannot be incorporated into DNA. This Leptospira interrogans serogroup Icterohaemorrhagiae serovar copenhageni (strain Fiocruz L1-130) protein is Deoxyuridine 5'-triphosphate nucleotidohydrolase.